The following is a 359-amino-acid chain: Squamosa promoter-binding-like protein 13A (359 aa).

A disordered region spans residues 75–94 (AKPEGSRSSSSKRTRGNGVG). The SBP-type zinc-finger motif lies at 98–175 (MPICLVDGCD…DGHNRRRRKP (78 aa)). Positions 101, 106, 123, 126, 142, 145, 149, and 161 each coordinate Zn(2+). A Bipartite nuclear localization signal motif is present at residues 158-174 (KRSCRKRLDGHNRRRRK).

The cofactor is Zn(2+).

The protein localises to the nucleus. Its function is as follows. Trans-acting factor that binds specifically to the consensus nucleotide sequence 5'-TNCGTACAA-3'. The protein is Squamosa promoter-binding-like protein 13A (SPL13A) of Arabidopsis thaliana (Mouse-ear cress).